The following is a 202-amino-acid chain: Probable 1-Cys peroxiredoxin (202 aa).

The 148-residue stretch at 1 to 148 folds into the Thioredoxin domain; it reads STHGKIRIHD…VVRAVDSLLT (148 aa). Cys-30 serves as the catalytic Cysteine sulfenic acid (-SOH) intermediate. The short motif at 178 to 201 is the Bipartite nuclear localization signal element; the sequence is KKLFPQGFETKDLPSKKGYLRFTK.

The protein belongs to the peroxiredoxin family. Prx6 subfamily. In terms of tissue distribution, embryos.

It is found in the nucleus. It localises to the cytoplasm. It carries out the reaction a hydroperoxide + [thioredoxin]-dithiol = an alcohol + [thioredoxin]-disulfide + H2O. In terms of biological role, thiol-specific peroxidase that catalyzes the reduction of hydrogen peroxide and organic hydroperoxides to water and alcohols, respectively. Seems to contribute to the inhibition of germination during stress. The polypeptide is Probable 1-Cys peroxiredoxin (Bromus secalinus (Rye brome)).